The chain runs to 251 residues: Indole-3-glycerol phosphate synthase (251 aa).

A compositionally biased stretch (polar residues) spans 1–12 (MDDSSSLASPVQ). The tract at residues 1-27 (MDDSSSLASPVQSILAAARRRDPPTRR) is disordered.

The protein belongs to the TrpC family.

It carries out the reaction 1-(2-carboxyphenylamino)-1-deoxy-D-ribulose 5-phosphate + H(+) = (1S,2R)-1-C-(indol-3-yl)glycerol 3-phosphate + CO2 + H2O. It functions in the pathway amino-acid biosynthesis; L-tryptophan biosynthesis; L-tryptophan from chorismate: step 4/5. The sequence is that of Indole-3-glycerol phosphate synthase from Halobacterium salinarum (strain ATCC 700922 / JCM 11081 / NRC-1) (Halobacterium halobium).